We begin with the raw amino-acid sequence, 270 residues long: 4-hydroxy-tetrahydrodipicolinate reductase (270 aa).

Residues 11 to 16 and E37 contribute to the NAD(+) site; that span reads GAGGRM. Residue R38 participates in NADP(+) binding. NAD(+)-binding positions include 101 to 103 and 125 to 128; these read GTT and APNM. The active-site Proton donor/acceptor is H158. Position 159 (H159) interacts with (S)-2,3,4,5-tetrahydrodipicolinate. The active-site Proton donor is the K162. 168–169 lines the (S)-2,3,4,5-tetrahydrodipicolinate pocket; it reads GT.

This sequence belongs to the DapB family.

The protein resides in the cytoplasm. The catalysed reaction is (S)-2,3,4,5-tetrahydrodipicolinate + NAD(+) + H2O = (2S,4S)-4-hydroxy-2,3,4,5-tetrahydrodipicolinate + NADH + H(+). It carries out the reaction (S)-2,3,4,5-tetrahydrodipicolinate + NADP(+) + H2O = (2S,4S)-4-hydroxy-2,3,4,5-tetrahydrodipicolinate + NADPH + H(+). It participates in amino-acid biosynthesis; L-lysine biosynthesis via DAP pathway; (S)-tetrahydrodipicolinate from L-aspartate: step 4/4. Functionally, catalyzes the conversion of 4-hydroxy-tetrahydrodipicolinate (HTPA) to tetrahydrodipicolinate. The sequence is that of 4-hydroxy-tetrahydrodipicolinate reductase from Shewanella baltica (strain OS223).